The following is a 452-amino-acid chain: Photoreceptor ankyrin repeat protein (452 aa).

4 ANK repeats span residues 94–123, 130–160, 164–193, and 223–257; these read CRLG…SPEE, NGRT…DVNQ, GGDT…GLDL, and RGKT…QLSQ. Disordered regions lie at residues 335-369 and 405-427; these read LGTR…SPWV and SKAS…QSLA. Residues 349–362 are compositionally biased toward pro residues; that stretch reads APPPPLVPQSPPGS. A compositionally biased stretch (polar residues) spans 406-424; it reads KASSSSHQCQPKPSPSGHQ.

It is found in the cytoplasm. The protein resides in the cytosol. The protein localises to the nucleus. Acts as a transcriptional repressor for CRX-activated photoreceptor gene regulation. This chain is Photoreceptor ankyrin repeat protein, found in Homo sapiens (Human).